We begin with the raw amino-acid sequence, 462 residues long: uncharacterized protein (462 aa).

Belongs to the IIV-6 329R family.

This is an uncharacterized protein from Aedes vexans (Inland floodwater mosquito).